Here is a 181-residue protein sequence, read N- to C-terminus: Urease accessory protein UreE (181 aa).

The tract at residues 143–181 is disordered; sequence FDPEPGAYNQAGQGHSHGHSHGHSHNHDHEHSHGHKHAH.

The protein belongs to the UreE family.

The protein localises to the cytoplasm. Functionally, involved in urease metallocenter assembly. Binds nickel. Probably functions as a nickel donor during metallocenter assembly. The polypeptide is Urease accessory protein UreE (Marinobacter nauticus (strain ATCC 700491 / DSM 11845 / VT8) (Marinobacter aquaeolei)).